The sequence spans 266 residues: Glucosamine-6-phosphate deaminase (266 aa).

The Proton acceptor; for enolization step role is filled by D72. D141 functions as the For ring-opening step in the catalytic mechanism. H143 serves as the catalytic Proton acceptor; for ring-opening step. E148 functions as the For ring-opening step in the catalytic mechanism.

It belongs to the glucosamine/galactosamine-6-phosphate isomerase family. NagB subfamily. In terms of assembly, homohexamer.

The enzyme catalyses alpha-D-glucosamine 6-phosphate + H2O = beta-D-fructose 6-phosphate + NH4(+). The protein operates within amino-sugar metabolism; N-acetylneuraminate degradation; D-fructose 6-phosphate from N-acetylneuraminate: step 5/5. With respect to regulation, allosterically activated by N-acetylglucosamine 6-phosphate (GlcNAc6P). Functionally, catalyzes the reversible isomerization-deamination of glucosamine 6-phosphate (GlcN6P) to form fructose 6-phosphate (Fru6P) and ammonium ion. This Citrobacter koseri (strain ATCC BAA-895 / CDC 4225-83 / SGSC4696) protein is Glucosamine-6-phosphate deaminase.